A 614-amino-acid chain; its full sequence is Sulfite reductase [NADPH] flavoprotein alpha-component (614 aa).

Positions 79 to 217 (LTIIFASQTG…AATEWRKQVL (139 aa)) constitute a Flavodoxin-like domain. Residues 85-90 (SQTGNA), 132-135 (STNG), and 168-177 (LGDSSYQFFC) contribute to the FMN site. The 215-residue stretch at 249 to 463 (EQPYTASLST…VEHNNNFKLP (215 aa)) folds into the FAD-binding FR-type domain. Residues threonine 337, threonine 371, 401 to 404 (RLYS), 419 to 421 (TVG), tyrosine 425, and 434 to 437 (GGAS) each bind FAD. NADP(+) contacts are provided by residues 534–535 (SR), 540–544 (KVYVQ), and aspartate 576. Position 614 (tyrosine 614) interacts with FAD.

It belongs to the NADPH-dependent sulphite reductase flavoprotein subunit CysJ family. In the N-terminal section; belongs to the flavodoxin family. This sequence in the C-terminal section; belongs to the flavoprotein pyridine nucleotide cytochrome reductase family. In terms of assembly, alpha(8)-beta(8). The alpha component is a flavoprotein, the beta component is a hemoprotein. FAD is required as a cofactor. FMN serves as cofactor.

It catalyses the reaction hydrogen sulfide + 3 NADP(+) + 3 H2O = sulfite + 3 NADPH + 4 H(+). Its pathway is sulfur metabolism; hydrogen sulfide biosynthesis; hydrogen sulfide from sulfite (NADPH route): step 1/1. Functionally, component of the sulfite reductase complex that catalyzes the 6-electron reduction of sulfite to sulfide. This is one of several activities required for the biosynthesis of L-cysteine from sulfate. The flavoprotein component catalyzes the electron flow from NADPH -&gt; FAD -&gt; FMN to the hemoprotein component. This chain is Sulfite reductase [NADPH] flavoprotein alpha-component, found in Vibrio cholerae serotype O1 (strain ATCC 39541 / Classical Ogawa 395 / O395).